Here is an 82-residue protein sequence, read N- to C-terminus: uncharacterized protein (82 aa).

Belongs to the chlamydial CPn_0711/CT_665/TC_0036 family.

This is an uncharacterized protein from Chlamydia pneumoniae (Chlamydophila pneumoniae).